The primary structure comprises 269 residues: E3 ubiquitin-protein ligase complex slx8-rfp subunit slx8 (269 aa).

Residues 1–10 (MPPAHKRDTN) show a composition bias toward basic and acidic residues. Disordered stretches follow at residues 1–75 (MPPA…LNRA) and 166–196 (PRKQ…QVVP). The segment covering 60-70 (PSGTTSENESL) has biased composition (polar residues). An RING-type zinc finger spans residues 206 to 247 (CVICLDSPENLSCTPCGHIFCNFCILSALGTTAATQKCPVCR).

As to quaternary structure, part of an E3 ubiquitin complex including rfp1, rfp2 and slx8. Interacts with rfp1 and rfp2.

The protein resides in the nucleus. It carries out the reaction S-ubiquitinyl-[E2 ubiquitin-conjugating enzyme]-L-cysteine + [acceptor protein]-L-lysine = [E2 ubiquitin-conjugating enzyme]-L-cysteine + N(6)-ubiquitinyl-[acceptor protein]-L-lysine.. It functions in the pathway protein modification; protein ubiquitination. In terms of biological role, mediates ubiquitination and subsequent desumoylation/degradation of sumoylated proteins and proteins containing SUMO-like domains. Acts as a critical suppressor of gross chromosomal rearrangements (GCRs) during normal cell cycle progression. Involved in stabilizing, restarting or resolving transiently stalled replication forks. Prevents accumulation of DNA damage during cell cycle progression. The chain is E3 ubiquitin-protein ligase complex slx8-rfp subunit slx8 (slx8) from Schizosaccharomyces pombe (strain 972 / ATCC 24843) (Fission yeast).